The primary structure comprises 68 residues: ATP synthase subunit K, mitochondrial (68 aa).

The helical transmembrane segment at 15–31 (HQLAIGTLGLLGLLVVP) threads the bilayer.

The protein belongs to the ATP19 family. As to quaternary structure, F-type ATPases have 2 components, CF(1) - the catalytic core - and CF(0) - the membrane proton channel. In yeast, the dimeric form of ATP synthase consists of 17 polypeptides: alpha, beta, gamma, delta, epsilon, 4 (B), 5 (OSCP), 6 (A), 8, 9 (C), d, E (Tim11), f, g, h, i/j and k.

The protein resides in the mitochondrion inner membrane. Its function is as follows. Mitochondrial membrane ATP synthase (F(1)F(0) ATP synthase or Complex V) produces ATP from ADP in the presence of a proton gradient across the membrane which is generated by electron transport complexes of the respiratory chain. F-type ATPases consist of two structural domains, F(1) - containing the extramembraneous catalytic core and F(0) - containing the membrane proton channel, linked together by a central stalk and a peripheral stalk. During catalysis, ATP synthesis in the catalytic domain of F(1) is coupled via a rotary mechanism of the central stalk subunits to proton translocation. Part of the complex F(0) domain. Minor subunit located with subunit a in the membrane. The K chain binds the dimeric form by interacting with the G and E chains. The protein is ATP synthase subunit K, mitochondrial (ATP19) of Saccharomyces cerevisiae (strain ATCC 204508 / S288c) (Baker's yeast).